The following is a 211-amino-acid chain: Arginine exporter protein ArgO (211 aa).

6 helical membrane passes run 1–21 (MLSY…PLGP), 37–57 (LMIA…GIFG), 68–88 (LLAL…FGAL), 111–131 (IIAT…DTFV), 147–167 (WFAL…ALLA), and 186–206 (LVGL…IHHI).

This sequence belongs to the LysE/ArgO transporter (TC 2.A.75) family.

The protein resides in the cell inner membrane. The enzyme catalyses L-arginine(in) = L-arginine(out). Functionally, involved in the export of arginine. Important to control the intracellular level of arginine and the correct balance between arginine and lysine. The chain is Arginine exporter protein ArgO from Enterobacter sp. (strain 638).